Here is a 172-residue protein sequence, read N- to C-terminus: dCTP deaminase, dUMP-forming (172 aa).

DCTP is bound by residues 93 to 98 (RSSVGR), aspartate 111, 119 to 121 (TLE), glutamine 138, and tyrosine 151. Glutamate 121 (proton donor/acceptor) is an active-site residue.

The protein belongs to the dCTP deaminase family. As to quaternary structure, homotrimer.

The enzyme catalyses dCTP + 2 H2O = dUMP + NH4(+) + diphosphate. It participates in pyrimidine metabolism; dUMP biosynthesis; dUMP from dCTP: step 1/1. Its function is as follows. Bifunctional enzyme that catalyzes both the deamination of dCTP to dUTP and the hydrolysis of dUTP to dUMP without releasing the toxic dUTP intermediate. This Hathewaya histolytica (Clostridium histolyticum) protein is dCTP deaminase, dUMP-forming.